The following is a 240-amino-acid chain: MWSSLFGWTSSNAKNKESPTKAIVRLREHINLLSKKQSHLRTQITNQENEARIFLTKGNKVMAKNALKKKKTIEQLLSKVEGTMESMEQQLFSIESANLNLETMRAMQEGAKAMKTIHSGLDIDKVDETMDEIREQVELGDEISDAISRPLITGANEVDEDELDEELDMLAQENANQETSKIVNNNVNAAPISENKVSLPSVPSNKIKQSENSVKDGEEEEDEEDEDEKALRELQAEMGL.

T72 carries the phosphothreonine modification. Residues S119 and S193 each carry the phosphoserine modification. The disordered stretch occupies residues 193–240 (SENKVSLPSVPSNKIKQSENSVKDGEEEEDEEDEDEKALRELQAEMGL). Residues 195 to 212 (NKVSLPSVPSNKIKQSEN) show a composition bias toward polar residues. A compositionally biased stretch (acidic residues) spans 217 to 228 (GEEEEDEEDEDE). K229 participates in a covalent cross-link: Glycyl lysine isopeptide (Lys-Gly) (interchain with G-Cter in ubiquitin). Basic and acidic residues predominate over residues 229–240 (KALRELQAEMGL).

The protein belongs to the SNF7 family. As to quaternary structure, core component of the ESCRT-III complex (endosomal sorting required for transport complex III). ESCRT-III appears to be sequentially assembled as a flat lattice on the endosome membrane and forms a transient 450 kDa complex that contains DID4, oligomerized SNF7, VPS20 and VPS24. SNF7 polymerizes into spirals at the surface of lipid bilayers. SNF7 polymerization is nucleated by association of SNF7 with VPS20; the process is terminated through association of VPS24, possibly by capping the SNF7 filament. Interacts with VTA1; the interaction requires DID2. Interacts with BRO1. Interacts with DOA4. Interacts with HEH1 and HEH2. Interacts with RIM20 and YGR122W.

It localises to the cytoplasm. It is found in the endosome membrane. The protein localises to the nucleus envelope. Its function is as follows. Acts a component of the ESCRT-III complex required for the sorting and concentration of proteins resulting in the entry of these proteins into the invaginating vesicles of the multivesicular body (MVB). The sequential action of ESCRT-0, -I, and -II together with the ordered assembly of ESCRT-III links membrane invagination to cargo sorting. Membrane scission in the neck of the growing vesicle releases mature, cargo-laden ILVs into the lumen. ESCRT-III is critical for late steps in MVB sorting, such as membrane invagination and final cargo sorting and recruitment of late-acting components of the sorting machinery. SNF7 is the most abundant ESCRT-III subunit which forms membrane-sculpting filaments with 30 Angstrom periodicity and a exposed cationic membrane-binding surface. Its activation requires a prominent conformational rearrangement to expose protein-membrane and protein-protein interfaces. SNF7 filaments then form spirals that could function as spiral springs. The elastic expansion of compressed SNF7 spirals generates an area difference between the two sides of the membrane and thus curvature which could be the origin of membrane deformation leading eventually to fission. SNF7 recruits BRO1, which in turn recruits DOA4, which deubiquitinates cargos before their enclosure within MVB vesicles. ESCRT-III is also recruited to the nuclear envelope (NE) by integral INM proteins to surveil and clear defective nuclear pore complex (NPC) assembly intermediates to ensure the fidelity of NPC assembly. In Saccharomyces cerevisiae (strain ATCC 204508 / S288c) (Baker's yeast), this protein is Vacuolar-sorting protein SNF7.